A 156-amino-acid chain; its full sequence is Biotin carboxyl carrier protein of acetyl-CoA carboxylase (156 aa).

The Biotinyl-binding domain maps to 80 to 156 (GNVVRSPMVG…EFDQPLFTIV (77 aa)). At K122 the chain carries N6-biotinyllysine.

In terms of assembly, homodimer.

It functions in the pathway lipid metabolism; fatty acid biosynthesis. Functionally, this protein is a component of the acetyl coenzyme A carboxylase complex; first, biotin carboxylase catalyzes the carboxylation of the carrier protein and then the transcarboxylase transfers the carboxyl group to form malonyl-CoA. The polypeptide is Biotin carboxyl carrier protein of acetyl-CoA carboxylase (accB) (Pseudomonas aeruginosa (strain ATCC 15692 / DSM 22644 / CIP 104116 / JCM 14847 / LMG 12228 / 1C / PRS 101 / PAO1)).